The sequence spans 204 residues: Anthranilate synthase component 2 (204 aa).

The Glutamine amidotransferase type-1 domain maps to 3–204 (RLVVVDNFDS…LTAVAGFDVA (202 aa)). 58–60 (GPG) serves as a coordination point for L-glutamine. Cys-88 acts as the Nucleophile; for GATase activity in catalysis. 138 to 139 (SL) provides a ligand contact to L-glutamine. Catalysis depends on for GATase activity residues His-178 and Glu-180.

In terms of assembly, heterotetramer consisting of two non-identical subunits: a beta subunit (TrpG) and a large alpha subunit (TrpE).

It catalyses the reaction chorismate + L-glutamine = anthranilate + pyruvate + L-glutamate + H(+). Its pathway is amino-acid biosynthesis; L-tryptophan biosynthesis; L-tryptophan from chorismate: step 1/5. Part of a heterotetrameric complex that catalyzes the two-step biosynthesis of anthranilate, an intermediate in the biosynthesis of L-tryptophan. In the first step, the glutamine-binding beta subunit (TrpG) of anthranilate synthase (AS) provides the glutamine amidotransferase activity which generates ammonia as a substrate that, along with chorismate, is used in the second step, catalyzed by the large alpha subunit of AS (TrpE) to produce anthranilate. In the absence of TrpG, TrpE can synthesize anthranilate directly from chorismate and high concentrations of ammonia. The chain is Anthranilate synthase component 2 (trpG) from Haloferax volcanii (strain ATCC 29605 / DSM 3757 / JCM 8879 / NBRC 14742 / NCIMB 2012 / VKM B-1768 / DS2) (Halobacterium volcanii).